Reading from the N-terminus, the 306-residue chain is Tyrosine recombinase XerC (306 aa).

Residues 1–90 (MYVHIDNFLV…AWRSFYRYLY (90 aa)) form the Core-binding (CB) domain. The 188-residue stretch at 111 to 298 (RLPRFLYEDE…TGERLKKVYR (188 aa)) folds into the Tyr recombinase domain. Active-site residues include R151, K175, H250, R253, and H276. Y285 (O-(3'-phospho-DNA)-tyrosine intermediate) is an active-site residue.

It belongs to the 'phage' integrase family. XerC subfamily. Forms a cyclic heterotetrameric complex composed of two molecules of XerC and two molecules of XerD.

It is found in the cytoplasm. In terms of biological role, site-specific tyrosine recombinase, which acts by catalyzing the cutting and rejoining of the recombining DNA molecules. The XerC-XerD complex is essential to convert dimers of the bacterial chromosome into monomers to permit their segregation at cell division. It also contributes to the segregational stability of plasmids. The protein is Tyrosine recombinase XerC of Pelotomaculum thermopropionicum (strain DSM 13744 / JCM 10971 / SI).